Here is a 90-residue protein sequence, read N- to C-terminus: Co-chaperonin GroES (90 aa).

It belongs to the GroES chaperonin family. Heptamer of 7 subunits arranged in a ring. Interacts with the chaperonin GroEL.

The protein resides in the cytoplasm. In terms of biological role, together with the chaperonin GroEL, plays an essential role in assisting protein folding. The GroEL-GroES system forms a nano-cage that allows encapsulation of the non-native substrate proteins and provides a physical environment optimized to promote and accelerate protein folding. GroES binds to the apical surface of the GroEL ring, thereby capping the opening of the GroEL channel. The chain is Co-chaperonin GroES from Fusobacterium nucleatum subsp. polymorphum (Fusobacterium polymorphum).